The following is a 150-amino-acid chain: D-aminoacyl-tRNA deacylase (150 aa).

The short motif at Gly138–Pro139 is the Gly-cisPro motif, important for rejection of L-amino acids element.

Belongs to the DTD family. Homodimer.

The protein resides in the cytoplasm. The catalysed reaction is glycyl-tRNA(Ala) + H2O = tRNA(Ala) + glycine + H(+). The enzyme catalyses a D-aminoacyl-tRNA + H2O = a tRNA + a D-alpha-amino acid + H(+). Its function is as follows. An aminoacyl-tRNA editing enzyme that deacylates mischarged D-aminoacyl-tRNAs. Also deacylates mischarged glycyl-tRNA(Ala), protecting cells against glycine mischarging by AlaRS. Acts via tRNA-based rather than protein-based catalysis; rejects L-amino acids rather than detecting D-amino acids in the active site. By recycling D-aminoacyl-tRNA to D-amino acids and free tRNA molecules, this enzyme counteracts the toxicity associated with the formation of D-aminoacyl-tRNA entities in vivo and helps enforce protein L-homochirality. The sequence is that of D-aminoacyl-tRNA deacylase from Chromobacterium violaceum (strain ATCC 12472 / DSM 30191 / JCM 1249 / CCUG 213 / NBRC 12614 / NCIMB 9131 / NCTC 9757 / MK).